The chain runs to 821 residues: Dapper homolog 1 (821 aa).

Residues 88 to 136 are a coiled coil; sequence LNTEEKLLEENILLLRKQLNCLRRRDAGLINQLQELDRQISDLRLDTET. Disordered stretches follow at residues 288–312, 386–432, 564–615, and 627–655; these read SKPGEALNDEQKPEQVVGSQTSSWH, QDAS…STTN, NSAS…KTKR, and ERHTSSSGARSSAQRHHGHHRHHEAVLAK. Low complexity predominate over residues 388–400; that stretch reads ASATSTEPSTASP. A compositionally biased stretch (polar residues) spans 401–432; it reads QRQWSAESKGGTPQNGAYLSSSQPQNSYSTTN. Composition is skewed to basic residues over residues 584-593, 601-615, and 639-649; these read DKHRTGSRRT, HLHKSSKKASAKTKR, and AQRHHGHHRHH. A PDZ-binding motif is present at residues 818 to 821; that stretch reads MTTV.

Belongs to the dapper family. Interacts with dvl2.

The protein resides in the cytoplasm. Its function is as follows. Involved in regulation of intracellular signaling pathways during development. Specifically thought to play a role in canonical and/or non-canonical Wnt signaling pathways through interaction with DSH (Dishevelled) family proteins. Binds to dvl2 and may regulate the degradation of ctnnb1/beta-catenin, thereby modulating the transcriptional activation of target genes of the Wnt signaling pathway. Seems to activate the canonical Wnt signaling pathway. The sequence is that of Dapper homolog 1 (dact1) from Danio rerio (Zebrafish).